The sequence spans 183 residues: Large ribosomal subunit protein bL32m (183 aa).

Residues Cys-99, Cys-102, Cys-112, and Cys-115 each coordinate Zn(2+).

This sequence belongs to the bacterial ribosomal protein bL32 family. In terms of assembly, component of the mitochondrial large ribosomal subunit (mt-LSU).

It is found in the mitochondrion. Functionally, component of the mitochondrial large ribosomal subunit (mt-LSU). The mitochondrial ribosome (mitoribosome) is a large ribonucleoprotein complex responsible for the synthesis of proteins inside mitochondria. The polypeptide is Large ribosomal subunit protein bL32m (mrpl-32) (Caenorhabditis elegans).